Here is a 282-residue protein sequence, read N- to C-terminus: UDP-3-O-acyl-N-acetylglucosamine deacetylase (282 aa).

Zn(2+)-binding residues include His-80, His-240, and Asp-244. His-267 serves as the catalytic Proton donor.

It belongs to the LpxC family. Requires Zn(2+) as cofactor.

Its subcellular location is the plastid. It localises to the chloroplast. The enzyme catalyses a UDP-3-O-[(3R)-3-hydroxyacyl]-N-acetyl-alpha-D-glucosamine + H2O = a UDP-3-O-[(3R)-3-hydroxyacyl]-alpha-D-glucosamine + acetate. The protein operates within glycolipid biosynthesis; lipid IV(A) biosynthesis; lipid IV(A) from (3R)-3-hydroxytetradecanoyl-[acyl-carrier-protein] and UDP-N-acetyl-alpha-D-glucosamine: step 2/6. Functionally, catalyzes the hydrolysis of UDP-3-O-myristoyl-N-acetylglucosamine to form UDP-3-O-myristoylglucosamine and acetate. Involved in the biosynthesis of lipid A, a phosphorylated glycolipid that in bacteria anchors the lipopolysaccharide to the outer membrane of the cell. The target for the lipopolysaccharides produced in the chloroplast could either be the cell envelope of the eukaryote or the plastid membrane. The chain is UDP-3-O-acyl-N-acetylglucosamine deacetylase from Cyanidium caldarium (Red alga).